The following is a 99-amino-acid chain: MIPDPRDIILAPVISEKSYGLLEENQYTFLVRPGSNKTEIKIAVEKIFGVKVTNVNTINRQGKRKRTRTGYGKRKDTKRAIVTLSPESKPIEIFGGPAA.

The protein belongs to the universal ribosomal protein uL23 family. Part of the 50S ribosomal subunit. Contacts protein L29, and trigger factor when it is bound to the ribosome.

In terms of biological role, one of the early assembly proteins it binds 23S rRNA. One of the proteins that surrounds the polypeptide exit tunnel on the outside of the ribosome. Forms the main docking site for trigger factor binding to the ribosome. The sequence is that of Large ribosomal subunit protein uL23 from Saccharopolyspora erythraea (strain ATCC 11635 / DSM 40517 / JCM 4748 / NBRC 13426 / NCIMB 8594 / NRRL 2338).